The following is a 176-amino-acid chain: Small ribosomal subunit protein bS6 (176 aa).

Residues 97–176 (DQYTPNDSPP…VEPVDTTSEE (80 aa)) are disordered. The segment covering 140–160 (AVETVEPPAEPAEPVEAVETV) has biased composition (low complexity). Residues 161–176 (DTTEETVEPVDTTSEE) are compositionally biased toward acidic residues.

The protein belongs to the bacterial ribosomal protein bS6 family.

Binds together with bS18 to 16S ribosomal RNA. The chain is Small ribosomal subunit protein bS6 from Gloeothece citriformis (strain PCC 7424) (Cyanothece sp. (strain PCC 7424)).